A 172-amino-acid polypeptide reads, in one-letter code: Myosin regulatory light polypeptide 9 (172 aa).

A compositionally biased stretch (basic residues) spans Met-1–Gln-16. Residues Met-1–Ser-20 are disordered. N-acetylserine is present on Ser-2. Phosphothreonine; by MLCK, CIT and ROCK2 is present on Thr-19. A Phosphoserine; by CDC42BP, CIT, MLCK, PAK1, ROCK1, ROCK2, DAPK1, DAPK2 and ZIPK/DAPK3 modification is found at Ser-20. 3 consecutive EF-hand domains span residues Ser-29–Asn-64, Asp-98–Arg-133, and Phe-134–Asp-169. Ca(2+) is bound by residues Asp-42, Asn-44, Asp-46, and Asp-53.

As to quaternary structure, myosin is a hexamer of 2 heavy chains and 4 light chains: interacts with myosin heavy chain MYO19. Interacts with LUZP1; the interaction results in inhibition of phosphorylation of MYL9 by DAPK3. In terms of processing, phosphorylation increases the actin-activated myosin ATPase activity and thereby regulates the contractile activity. It is required to generate the driving force in the migration of the cells but not necessary for localization of myosin-2 at the leading edge. Phosphorylation is required for myotube formation. Phosphorylated by DAPK3; DAPK3-mediated phosphorylation is inhibited by LUZP1.

The protein resides in the cytoplasm. The protein localises to the cytoskeleton. It is found in the cell cortex. In terms of biological role, myosin regulatory subunit that plays an important role in regulation of both smooth muscle and nonmuscle cell contractile activity via its phosphorylation. Implicated in cytokinesis, receptor capping, and cell locomotion. In myoblasts, regulates PIEZO1-dependent cortical actomyosin assembly involved in myotube formation. The protein is Myosin regulatory light polypeptide 9 (Myl9) of Mus musculus (Mouse).